A 358-amino-acid chain; its full sequence is Photosystem II protein D1 1 (358 aa).

A run of 3 helical transmembrane segments spans residues 28–45 (YVGWFGVLMIPCLLAATI), 117–132 (HFLIGISAYMGRQWEL), and 141–155 (WICVAYSAPLSAAFA). His-117 is a chlorophyll a binding site. Tyr-125 is a binding site for pheophytin a. [CaMn4O5] cluster-binding residues include Asp-169 and Glu-188. The helical transmembrane segment at 196–217 (FHMLGVAGVFGGSLFSAMHGSL) threads the bilayer. His-197 lines the chlorophyll a pocket. Residues His-214 and 263–264 (SF) each bind a quinone. His-214 serves as a coordination point for Fe cation. His-271 contributes to the Fe cation binding site. The helical transmembrane segment at 273 to 287 (FLGAWPVIGIWFTSM) threads the bilayer. [CaMn4O5] cluster-binding residues include His-331, Glu-332, Asp-341, and Ala-343. Residues 344–358 (AAESTPVALQAPAIG) constitute a propeptide that is removed on maturation.

Belongs to the reaction center PufL/M/PsbA/D family. PSII is composed of 1 copy each of membrane proteins PsbA, PsbB, PsbC, PsbD, PsbE, PsbF, PsbH, PsbI, PsbJ, PsbK, PsbL, PsbM, PsbT, PsbX, PsbY, PsbZ, Psb30/Ycf12, peripheral proteins PsbO, CyanoQ (PsbQ), PsbU, PsbV and a large number of cofactors. It forms dimeric complexes. The D1/D2 heterodimer binds P680, chlorophylls that are the primary electron donor of PSII, and subsequent electron acceptors. It shares a non-heme iron and each subunit binds pheophytin, quinone, additional chlorophylls, carotenoids and lipids. D1 provides most of the ligands for the Mn4-Ca-O5 cluster of the oxygen-evolving complex (OEC). There is also a Cl(-1) ion associated with D1 and D2, which is required for oxygen evolution. The PSII complex binds additional chlorophylls, carotenoids and specific lipids. serves as cofactor. Post-translationally, tyr-160 forms a radical intermediate that is referred to as redox-active TyrZ, YZ or Y-Z. C-terminally processed by CtpA; processing is essential to allow assembly of the oxygen-evolving complex and thus photosynthetic growth.

Its subcellular location is the cellular thylakoid membrane. It carries out the reaction 2 a plastoquinone + 4 hnu + 2 H2O = 2 a plastoquinol + O2. Its function is as follows. Photosystem II (PSII) is a light-driven water:plastoquinone oxidoreductase that uses light energy to abstract electrons from H(2)O, generating O(2) and a proton gradient subsequently used for ATP formation. It consists of a core antenna complex that captures photons, and an electron transfer chain that converts photonic excitation into a charge separation. The D1/D2 (PsbA/PsbD) reaction center heterodimer binds P680, the primary electron donor of PSII as well as several subsequent electron acceptors. The sequence is that of Photosystem II protein D1 1 from Synechococcus sp. (strain CC9902).